Consider the following 970-residue polypeptide: UvrABC system protein A (970 aa).

34 to 41 (GVSGSGKS) contributes to the ATP binding site. A C4-type zinc finger spans residues 284 to 311 (CPEHGAVMDELSPRLFSFNSPYGACPDC). ABC transporter domains lie at 340–617 (WSEK…QRSL) and 637–965 (GNGA…KYLA). 669–676 (GVSGSGKS) provides a ligand contact to ATP. The C4-type zinc finger occupies 768 to 794 (CEACAGQGVNVIEMNFLPDVYVQCDVC).

It belongs to the ABC transporter superfamily. UvrA family. As to quaternary structure, forms a heterotetramer with UvrB during the search for lesions.

The protein resides in the cytoplasm. The UvrABC repair system catalyzes the recognition and processing of DNA lesions. UvrA is an ATPase and a DNA-binding protein. A damage recognition complex composed of 2 UvrA and 2 UvrB subunits scans DNA for abnormalities. When the presence of a lesion has been verified by UvrB, the UvrA molecules dissociate. This Synechocystis sp. (strain ATCC 27184 / PCC 6803 / Kazusa) protein is UvrABC system protein A.